Here is a 156-residue protein sequence, read N- to C-terminus: Small ribosomal subunit protein uS7 (156 aa).

The protein belongs to the universal ribosomal protein uS7 family. Part of the 30S ribosomal subunit. Contacts proteins S9 and S11.

Its function is as follows. One of the primary rRNA binding proteins, it binds directly to 16S rRNA where it nucleates assembly of the head domain of the 30S subunit. Is located at the subunit interface close to the decoding center, probably blocks exit of the E-site tRNA. This chain is Small ribosomal subunit protein uS7, found in Exiguobacterium sibiricum (strain DSM 17290 / CCUG 55495 / CIP 109462 / JCM 13490 / 255-15).